The chain runs to 252 residues: Mitochondrial peculiar membrane protein 1 (252 aa).

Residues 230-252 (TTTTSKGSSPQVKHKVVSVDEDN) form a disordered region.

Its subcellular location is the mitochondrion membrane. This chain is Mitochondrial peculiar membrane protein 1 (MPM1), found in Saccharomyces cerevisiae (strain ATCC 204508 / S288c) (Baker's yeast).